The following is a 503-amino-acid chain: D-alanine--D-alanyl carrier protein ligase (503 aa).

151-152 (TS) lines the ATP pocket. Asp196 is a D-alanine binding site. 291-296 (NTYGPT) contacts ATP. Val300 lines the D-alanine pocket. ATP is bound by residues Asp382, 393–396 (YNGR), and Lys491. Lys491 contacts D-alanine.

Belongs to the ATP-dependent AMP-binding enzyme family. DltA subfamily.

Its subcellular location is the cytoplasm. The catalysed reaction is holo-[D-alanyl-carrier protein] + D-alanine + ATP = D-alanyl-[D-alanyl-carrier protein] + AMP + diphosphate. It functions in the pathway cell wall biogenesis; lipoteichoic acid biosynthesis. In terms of biological role, catalyzes the first step in the D-alanylation of lipoteichoic acid (LTA), the activation of D-alanine and its transfer onto the D-alanyl carrier protein (Dcp) DltC. In an ATP-dependent two-step reaction, forms a high energy D-alanyl-AMP intermediate, followed by transfer of the D-alanyl residue as a thiol ester to the phosphopantheinyl prosthetic group of the Dcp. D-alanylation of LTA plays an important role in modulating the properties of the cell wall in Gram-positive bacteria, influencing the net charge of the cell wall. The sequence is that of D-alanine--D-alanyl carrier protein ligase from Bacillus anthracis (strain A0248).